We begin with the raw amino-acid sequence, 468 residues long: UDP-N-acetylmuramate--L-alanine ligase (468 aa).

An ATP-binding site is contributed by 114-120; the sequence is GTHGKTT.

The protein belongs to the MurCDEF family.

The protein resides in the cytoplasm. The enzyme catalyses UDP-N-acetyl-alpha-D-muramate + L-alanine + ATP = UDP-N-acetyl-alpha-D-muramoyl-L-alanine + ADP + phosphate + H(+). The protein operates within cell wall biogenesis; peptidoglycan biosynthesis. In terms of biological role, cell wall formation. The polypeptide is UDP-N-acetylmuramate--L-alanine ligase (Methylorubrum extorquens (strain PA1) (Methylobacterium extorquens)).